The chain runs to 871 residues: Leucine--tRNA ligase (871 aa).

The 'HIGH' region motif lies at 42 to 52 (PYPSGSLHMGH). The 'KMSKS' region motif lies at 634-638 (TMSKS). K637 contacts ATP.

Belongs to the class-I aminoacyl-tRNA synthetase family.

The protein resides in the cytoplasm. It catalyses the reaction tRNA(Leu) + L-leucine + ATP = L-leucyl-tRNA(Leu) + AMP + diphosphate. The chain is Leucine--tRNA ligase from Nostoc punctiforme (strain ATCC 29133 / PCC 73102).